Consider the following 429-residue polypeptide: Adenylosuccinate synthetase (429 aa).

GTP contacts are provided by residues 12-18 and 40-42; these read GDEGKGK and GHT. Catalysis depends on D13, which acts as the Proton acceptor. Mg(2+) contacts are provided by D13 and G40. Residues 13–16, 38–41, T128, R142, Q223, T238, and R302 each bind IMP; these read DEGK and NAGH. H41 (proton donor) is an active-site residue. Position 298 to 304 (298 to 304) interacts with substrate; the sequence is TTTGRPR. Residues R304, 330-332, and 412-414 each bind GTP; these read SID and SVG.

It belongs to the adenylosuccinate synthetase family. Homodimer. It depends on Mg(2+) as a cofactor.

It is found in the cytoplasm. It catalyses the reaction IMP + L-aspartate + GTP = N(6)-(1,2-dicarboxyethyl)-AMP + GDP + phosphate + 2 H(+). Its pathway is purine metabolism; AMP biosynthesis via de novo pathway; AMP from IMP: step 1/2. Plays an important role in the de novo pathway of purine nucleotide biosynthesis. Catalyzes the first committed step in the biosynthesis of AMP from IMP. The chain is Adenylosuccinate synthetase from Bacillus thuringiensis (strain Al Hakam).